Consider the following 472-residue polypeptide: Kynureninase 1 (472 aa).

Residues Leu-146, Thr-147, 174 to 177, Ser-231, Asp-260, His-263, and Tyr-285 each bind pyridoxal 5'-phosphate; that span reads FPSD. Lys-286 carries the N6-(pyridoxal phosphate)lysine modification. Pyridoxal 5'-phosphate contacts are provided by Trp-326 and Asn-354.

This sequence belongs to the kynureninase family. Homodimer. Pyridoxal 5'-phosphate is required as a cofactor.

The protein resides in the cytoplasm. The enzyme catalyses L-kynurenine + H2O = anthranilate + L-alanine + H(+). The catalysed reaction is 3-hydroxy-L-kynurenine + H2O = 3-hydroxyanthranilate + L-alanine + H(+). It participates in amino-acid degradation; L-kynurenine degradation; L-alanine and anthranilate from L-kynurenine: step 1/1. The protein operates within cofactor biosynthesis; NAD(+) biosynthesis; quinolinate from L-kynurenine: step 2/3. Functionally, catalyzes the cleavage of L-kynurenine (L-Kyn) and L-3-hydroxykynurenine (L-3OHKyn) into anthranilic acid (AA) and 3-hydroxyanthranilic acid (3-OHAA), respectively. In Aspergillus niger (strain ATCC MYA-4892 / CBS 513.88 / FGSC A1513), this protein is Kynureninase 1 (bna5-1).